We begin with the raw amino-acid sequence, 274 residues long: NADPH-dependent 7-cyano-7-deazaguanine reductase (274 aa).

Positions Met-1–Ser-33 are disordered. Residue Ile-84 to Ser-86 participates in substrate binding. Ser-86–Lys-87 serves as a coordination point for NADPH. Catalysis depends on Cys-183, which acts as the Thioimide intermediate. The active-site Proton donor is the Asp-190. His-222–Glu-223 is a substrate binding site. NADPH is bound at residue Arg-250–Gly-251.

The protein belongs to the GTP cyclohydrolase I family. QueF type 2 subfamily. In terms of assembly, homodimer.

The protein resides in the cytoplasm. The enzyme catalyses 7-aminomethyl-7-carbaguanine + 2 NADP(+) = 7-cyano-7-deazaguanine + 2 NADPH + 3 H(+). The protein operates within tRNA modification; tRNA-queuosine biosynthesis. Catalyzes the NADPH-dependent reduction of 7-cyano-7-deazaguanine (preQ0) to 7-aminomethyl-7-deazaguanine (preQ1). The chain is NADPH-dependent 7-cyano-7-deazaguanine reductase from Idiomarina loihiensis (strain ATCC BAA-735 / DSM 15497 / L2-TR).